The chain runs to 56 residues: Large ribosomal subunit protein bL33A (56 aa).

The protein belongs to the bacterial ribosomal protein bL33 family.

This is Large ribosomal subunit protein bL33A from Cutibacterium acnes (strain DSM 16379 / KPA171202) (Propionibacterium acnes).